The sequence spans 253 residues: Non-homologous end joining protein Ku (253 aa).

Residues 9–192 (ISFGLVNIPV…EITEEELELA (184 aa)) enclose the Ku domain.

It belongs to the prokaryotic Ku family. In terms of assembly, homodimer. Interacts with LigD.

With LigD forms a non-homologous end joining (NHEJ) DNA repair enzyme, which repairs dsDNA breaks with reduced fidelity. Binds linear dsDNA with 5'- and 3'- overhangs but not closed circular dsDNA nor ssDNA. Recruits and stimulates the ligase activity of LigD. The protein is Non-homologous end joining protein Ku of Archaeoglobus fulgidus (strain ATCC 49558 / DSM 4304 / JCM 9628 / NBRC 100126 / VC-16).